A 432-amino-acid chain; its full sequence is MTLWVLGLNHQTAPVDLRERAAFAGDALPRALESLRALPQVSEAALLSTCNRTELYAMADEARSLVNWLETHAPGLSGYLYQHQEAEAVRHLFRVATGLDSMVLGEPQILGQVKDAWAVARAHGALGSGLDRLFQQTFSVAKRARTDTRVGANPVSVASTAVRLAQESFARLNESTVLLIGAGETIELAAKHLSESRVRRLLIANRTLAHAQTLASQHGGYALPLTDLERHLAEADVVFSATAAREPLVTRVQVEQALRARKRKPMLLFDLAVPRDIEASVDELSDAYLYTVDDLERAVEDNRRGRREAADQAEAIIDLQVARYVETLQATTRQAPLKRLRAFGDSTRDELLAKARQQLHNGKPTDEVLEQLAHALTNRLLHPPTAALRDAALNNDLELTTAADRLFPEKPGYQHPPIATPIVRTDDADPAP.

Residues 49-52 (TCNR), S101, 106-108 (EPQ), and Q112 contribute to the substrate site. C50 serves as the catalytic Nucleophile. NADP(+) is bound at residue 181–186 (GAGETI). Positions 407-432 (FPEKPGYQHPPIATPIVRTDDADPAP) are disordered.

This sequence belongs to the glutamyl-tRNA reductase family. Homodimer.

The enzyme catalyses (S)-4-amino-5-oxopentanoate + tRNA(Glu) + NADP(+) = L-glutamyl-tRNA(Glu) + NADPH + H(+). Its pathway is porphyrin-containing compound metabolism; protoporphyrin-IX biosynthesis; 5-aminolevulinate from L-glutamyl-tRNA(Glu): step 1/2. Catalyzes the NADPH-dependent reduction of glutamyl-tRNA(Glu) to glutamate 1-semialdehyde (GSA). The protein is Glutamyl-tRNA reductase of Xanthomonas oryzae pv. oryzae (strain MAFF 311018).